Here is a 215-residue protein sequence, read N- to C-terminus: 3-isopropylmalate dehydratase small subunit (215 aa).

The protein belongs to the LeuD family. LeuD type 1 subfamily. Heterodimer of LeuC and LeuD.

It carries out the reaction (2R,3S)-3-isopropylmalate = (2S)-2-isopropylmalate. Its pathway is amino-acid biosynthesis; L-leucine biosynthesis; L-leucine from 3-methyl-2-oxobutanoate: step 2/4. Catalyzes the isomerization between 2-isopropylmalate and 3-isopropylmalate, via the formation of 2-isopropylmaleate. This Teredinibacter turnerae (strain ATCC 39867 / T7901) protein is 3-isopropylmalate dehydratase small subunit.